We begin with the raw amino-acid sequence, 73 residues long: Cell division protein ZapB (73 aa).

A coiled-coil region spans residues L3–V66.

The protein belongs to the ZapB family. As to quaternary structure, homodimer. The ends of the coiled-coil dimer bind to each other, forming polymers. Interacts with FtsZ.

It localises to the cytoplasm. Functionally, non-essential, abundant cell division factor that is required for proper Z-ring formation. It is recruited early to the divisome by direct interaction with FtsZ, stimulating Z-ring assembly and thereby promoting cell division earlier in the cell cycle. Its recruitment to the Z-ring requires functional FtsA or ZipA. The chain is Cell division protein ZapB from Shewanella baltica (strain OS223).